We begin with the raw amino-acid sequence, 450 residues long: Phosphoglucosamine mutase 2 (450 aa).

Catalysis depends on Ser101, which acts as the Phosphoserine intermediate. Residues Ser101, Asp245, Asp247, and Asp249 each coordinate Mg(2+). Ser101 carries the phosphoserine modification.

It belongs to the phosphohexose mutase family. Requires Mg(2+) as cofactor. Activated by phosphorylation.

It carries out the reaction alpha-D-glucosamine 1-phosphate = D-glucosamine 6-phosphate. Functionally, catalyzes the conversion of glucosamine-6-phosphate to glucosamine-1-phosphate. This is Phosphoglucosamine mutase 2 from Shewanella baltica (strain OS185).